The primary structure comprises 264 residues: Dehydrodolichyl diphosphate synthase complex subunit SPAC4D7.04c (264 aa).

The protein belongs to the UPP synthase family. Forms an active dehydrodolichyl diphosphate synthase complex with nus1. Mg(2+) serves as cofactor.

The protein localises to the endoplasmic reticulum membrane. The enzyme catalyses n isopentenyl diphosphate + (2E,6E)-farnesyl diphosphate = a di-trans,poly-cis-polyprenyl diphosphate + n diphosphate. The protein operates within protein modification; protein glycosylation. Its function is as follows. With nus1, forms the dehydrodolichyl diphosphate synthase (DDS) complex, an essential component of the dolichol monophosphate (Dol-P) biosynthetic machinery. Adds multiple copies of isopentenyl pyrophosphate (IPP) to farnesyl pyrophosphate (FPP) to produce dehydrodolichyl diphosphate (Dedol-PP), a precursor of dolichol which is utilized as a sugar carrier in protein glycosylation in the endoplasmic reticulum (ER). The protein is Dehydrodolichyl diphosphate synthase complex subunit SPAC4D7.04c of Schizosaccharomyces pombe (strain 972 / ATCC 24843) (Fission yeast).